We begin with the raw amino-acid sequence, 165 residues long: NAD(P)H-quinone oxidoreductase subunit I, chloroplastic (165 aa).

4Fe-4S ferredoxin-type domains are found at residues 55–84 (GRIH…VDWE) and 95–124 (KSYS…MTEE). Residues cysteine 64, cysteine 67, cysteine 70, cysteine 74, cysteine 104, cysteine 107, cysteine 110, and cysteine 114 each coordinate [4Fe-4S] cluster.

Belongs to the complex I 23 kDa subunit family. In terms of assembly, NDH is composed of at least 16 different subunits, 5 of which are encoded in the nucleus. [4Fe-4S] cluster is required as a cofactor.

Its subcellular location is the plastid. The protein localises to the chloroplast thylakoid membrane. The catalysed reaction is a plastoquinone + NADH + (n+1) H(+)(in) = a plastoquinol + NAD(+) + n H(+)(out). It carries out the reaction a plastoquinone + NADPH + (n+1) H(+)(in) = a plastoquinol + NADP(+) + n H(+)(out). In terms of biological role, NDH shuttles electrons from NAD(P)H:plastoquinone, via FMN and iron-sulfur (Fe-S) centers, to quinones in the photosynthetic chain and possibly in a chloroplast respiratory chain. The immediate electron acceptor for the enzyme in this species is believed to be plastoquinone. Couples the redox reaction to proton translocation, and thus conserves the redox energy in a proton gradient. This is NAD(P)H-quinone oxidoreductase subunit I, chloroplastic from Psilotum nudum (Whisk fern).